A 189-amino-acid polypeptide reads, in one-letter code: MYLIAGLGNPGSKYEYTRHNAGFMVIDDLAKKLNIKVNKLKFKSLIGEGFIGDEKVILMKPSTYMNDSGKAILDCFNYYNLSAENLIVICDDIDIPFGTIRIKKKGSAGTHNGLKSIIYLIESQDFARIKVSVGQNDKYDLKDFVLSQFSKKEFEVLEKEIDMSSDAAIKIVEENVDYAMNNFNGKSVI.

Tyr-14 contacts tRNA. His-19 serves as the catalytic Proton acceptor. Tyr-64, Asn-66, and Asn-112 together coordinate tRNA.

This sequence belongs to the PTH family. Monomer.

Its subcellular location is the cytoplasm. It catalyses the reaction an N-acyl-L-alpha-aminoacyl-tRNA + H2O = an N-acyl-L-amino acid + a tRNA + H(+). In terms of biological role, hydrolyzes ribosome-free peptidyl-tRNAs (with 1 or more amino acids incorporated), which drop off the ribosome during protein synthesis, or as a result of ribosome stalling. Its function is as follows. Catalyzes the release of premature peptidyl moieties from peptidyl-tRNA molecules trapped in stalled 50S ribosomal subunits, and thus maintains levels of free tRNAs and 50S ribosomes. This is Peptidyl-tRNA hydrolase from Finegoldia magna (strain ATCC 29328 / DSM 20472 / WAL 2508) (Peptostreptococcus magnus).